A 477-amino-acid chain; its full sequence is Bifunctional protein HldE (477 aa).

Residues 1–318 form a ribokinase region; sequence MKVTLPEFER…ENAVRGRADT (318 aa). At K179 the chain carries N6-acetyllysine. Residue 195-198 coordinates ATP; that stretch reads NLSE. Residue D264 is part of the active site. The cytidylyltransferase stretch occupies residues 344-477; that stretch reads MTNGVFDILH…IKKIQQDKKG (134 aa).

The protein in the N-terminal section; belongs to the carbohydrate kinase PfkB family. It in the C-terminal section; belongs to the cytidylyltransferase family. As to quaternary structure, homodimer.

The catalysed reaction is D-glycero-beta-D-manno-heptose 7-phosphate + ATP = D-glycero-beta-D-manno-heptose 1,7-bisphosphate + ADP + H(+). It carries out the reaction D-glycero-beta-D-manno-heptose 1-phosphate + ATP + H(+) = ADP-D-glycero-beta-D-manno-heptose + diphosphate. Its pathway is nucleotide-sugar biosynthesis; ADP-L-glycero-beta-D-manno-heptose biosynthesis; ADP-L-glycero-beta-D-manno-heptose from D-glycero-beta-D-manno-heptose 7-phosphate: step 1/4. The protein operates within nucleotide-sugar biosynthesis; ADP-L-glycero-beta-D-manno-heptose biosynthesis; ADP-L-glycero-beta-D-manno-heptose from D-glycero-beta-D-manno-heptose 7-phosphate: step 3/4. In terms of biological role, catalyzes the phosphorylation of D-glycero-D-manno-heptose 7-phosphate at the C-1 position to selectively form D-glycero-beta-D-manno-heptose-1,7-bisphosphate. Its function is as follows. Catalyzes the ADP transfer from ATP to D-glycero-beta-D-manno-heptose 1-phosphate, yielding ADP-D-glycero-beta-D-manno-heptose. This is Bifunctional protein HldE from Escherichia coli (strain 55989 / EAEC).